The chain runs to 631 residues: Translation factor GUF1, mitochondrial (631 aa).

Residues 1–19 (MFNRRLLRHVRYAFQQVRS) constitute a mitochondrion transit peptide. In terms of domain architecture, tr-type G spans 33-214 (ERYRNFSIVA…AIVDRIPPPT (182 aa)). GTP contacts are provided by residues 42–49 (AHVDHGKS), 107–111 (DTPGH), and 161–164 (NKID).

It belongs to the TRAFAC class translation factor GTPase superfamily. Classic translation factor GTPase family. LepA subfamily.

The protein localises to the mitochondrion inner membrane. It carries out the reaction GTP + H2O = GDP + phosphate + H(+). Functionally, promotes mitochondrial protein synthesis. May act as a fidelity factor of the translation reaction, by catalyzing a one-codon backward translocation of tRNAs on improperly translocated ribosomes. Binds to mitochondrial ribosomes in a GTP-dependent manner. The protein is Translation factor GUF1, mitochondrial of Kluyveromyces lactis (strain ATCC 8585 / CBS 2359 / DSM 70799 / NBRC 1267 / NRRL Y-1140 / WM37) (Yeast).